The following is a 290-amino-acid chain: 4-hydroxy-tetrahydrodipicolinate synthase (290 aa).

Residue threonine 44 coordinates pyruvate. Residue tyrosine 132 is the Proton donor/acceptor of the active site. The active-site Schiff-base intermediate with substrate is the lysine 160. Isoleucine 202 provides a ligand contact to pyruvate.

This sequence belongs to the DapA family. Homotetramer; dimer of dimers.

Its subcellular location is the cytoplasm. It catalyses the reaction L-aspartate 4-semialdehyde + pyruvate = (2S,4S)-4-hydroxy-2,3,4,5-tetrahydrodipicolinate + H2O + H(+). The protein operates within amino-acid biosynthesis; L-lysine biosynthesis via DAP pathway; (S)-tetrahydrodipicolinate from L-aspartate: step 3/4. In terms of biological role, catalyzes the condensation of (S)-aspartate-beta-semialdehyde [(S)-ASA] and pyruvate to 4-hydroxy-tetrahydrodipicolinate (HTPA). The polypeptide is 4-hydroxy-tetrahydrodipicolinate synthase (Citrifermentans bemidjiense (strain ATCC BAA-1014 / DSM 16622 / JCM 12645 / Bem) (Geobacter bemidjiensis)).